The following is a 227-amino-acid chain: 2,3-bisphosphoglycerate-dependent phosphoglycerate mutase (227 aa).

Substrate contacts are provided by residues 8–15 (RHGQSIWN), 21–22 (TG), Arg58, 110–113 (ERYY), Lys121, 137–138 (RR), and 181–182 (GN). The Tele-phosphohistidine intermediate role is filled by His9. The active-site Proton donor/acceptor is the Glu110.

The protein belongs to the phosphoglycerate mutase family. BPG-dependent PGAM subfamily. In terms of assembly, homodimer.

It catalyses the reaction (2R)-2-phosphoglycerate = (2R)-3-phosphoglycerate. Its pathway is carbohydrate degradation; glycolysis; pyruvate from D-glyceraldehyde 3-phosphate: step 3/5. Its function is as follows. Catalyzes the interconversion of 2-phosphoglycerate and 3-phosphoglycerate. The polypeptide is 2,3-bisphosphoglycerate-dependent phosphoglycerate mutase (Pseudoalteromonas atlantica (strain T6c / ATCC BAA-1087)).